A 241-amino-acid polypeptide reads, in one-letter code: Class B acid phosphatase (241 aa).

The N-terminal stretch at 1–27 (MFITTKKSLIALVLATAGLISSPVSFA) is a signal peptide. The Nucleophile role is filled by aspartate 72. The Mg(2+) site is built by aspartate 72 and aspartate 74. Aspartate 74 acts as the Proton donor in catalysis. Residues 141–142 (TG) and lysine 181 each bind substrate. Aspartate 196 contacts Mg(2+).

It belongs to the class B bacterial acid phosphatase family. As to quaternary structure, homotetramer. Mg(2+) serves as cofactor.

Its subcellular location is the periplasm. It catalyses the reaction a phosphate monoester + H2O = an alcohol + phosphate. Dephosphorylates several organic phosphate monoesters. Also has a phosphotransferase activity catalyzing the transfer of low-energy phosphate groups from organic phosphate monoesters to free hydroxyl groups of various organic compounds. The protein is Class B acid phosphatase of Edwardsiella ictaluri (strain 93-146).